The following is a 215-amino-acid chain: Vacuolar ATPase assembly integral membrane protein VPH2 (215 aa).

Over 1-134 (MFEIKLNDRI…SQINKQIKEQ (134 aa)) the chain is Cytoplasmic. The chain crosses the membrane as a helical span at residues 135–155 (VTTVFNVLVSVISVVVAIWYW). At 156-167 (TGSSTNFPVHVR) the chain is on the lumenal side. Residues 168-186 (LLLCLFFGILVLVADVVVY) traverse the membrane as a helical segment. Residues 187-215 (NSYLKKLEEAKVKEKTKVEKKKVLSKITL) are Cytoplasmic-facing.

It is found in the endoplasmic reticulum membrane. Its function is as follows. Required for vacuolar ATPase assembly. The chain is Vacuolar ATPase assembly integral membrane protein VPH2 (VPH2) from Saccharomyces cerevisiae (strain ATCC 204508 / S288c) (Baker's yeast).